A 93-amino-acid polypeptide reads, in one-letter code: uncharacterized protein (93 aa).

This is an uncharacterized protein from Saimiriine herpesvirus 2 (strain 11) (SaHV-2).